Here is a 1386-residue protein sequence, read N- to C-terminus: Adhesin AWP3b (1386 aa).

Residues 1–19 form the signal peptide; sequence MISFVTLLAILGLLSISWA. Disulfide bonds link C115/C145, C144/C178, and C304/C341. N-linked (GlcNAc...) asparagine glycosylation is present at N117. N-linked (GlcNAc...) asparagine glycans are attached at residues N315, N345, N468, and N526. Residues 429-507 form a disordered region; that stretch reads TTDSPGHTIT…SSPTSDFSSV (79 aa). Disordered stretches follow at residues 530–553 and 612–690; these read IVDSSSSSASSLPSSMSSSLSSSM and TTDS…FSSV. Residues N651 and N709 are each glycosylated (N-linked (GlcNAc...) asparagine). 2 disordered regions span residues 714–739 and 795–873; these read VDSSSSSASSLPSSMPSSLPSSMSSS and TTDS…FSSV. Residues N834, N898, N1008, N1017, and N1096 are each glycosylated (N-linked (GlcNAc...) asparagine). A disordered region spans residues 1000 to 1032; it reads TIQESELSNTSRTTMTSNSSVSISSTSSRSSFS. 2 stretches are compositionally biased toward polar residues: residues 1140-1150 and 1159-1177; these read SHPVATNSGDK and QVSTTMTSSGPTPDTSSFD. The interval 1140–1186 is disordered; the sequence is SHPVATNSGDKPTTPKRSEQVSTTMTSSGPTPDTSSFDTDGMSAYSR. N1197 is a glycosylation site (N-linked (GlcNAc...) asparagine). The segment covering 1198–1218 has biased composition (polar residues); sequence KSSTSQLGNNKQTFSNLQLES. The tract at residues 1198 to 1227 is disordered; it reads KSSTSQLGNNKQTFSNLQLESTRPHSENEV. Residue N1229 is glycosylated (N-linked (GlcNAc...) asparagine). Positions 1241–1259 are enriched in polar residues; the sequence is STYGTNNVNPLSPTGSISI. The disordered stretch occupies residues 1241-1269; that stretch reads STYGTNNVNPLSPTGSISIPLTEDGQGDN. Residue N1287 is glycosylated (N-linked (GlcNAc...) asparagine).

It is found in the secreted. The protein resides in the cell wall. In terms of biological role, may play a role in cell adhesion. In Candida glabrata (strain ATCC 2001 / BCRC 20586 / JCM 3761 / NBRC 0622 / NRRL Y-65 / CBS 138) (Yeast), this protein is Adhesin AWP3b.